The primary structure comprises 88 residues: Small ribosomal subunit protein uS15 (88 aa).

It belongs to the universal ribosomal protein uS15 family. Part of the 30S ribosomal subunit. Forms a bridge to the 50S subunit in the 70S ribosome, contacting the 23S rRNA.

In terms of biological role, one of the primary rRNA binding proteins, it binds directly to 16S rRNA where it helps nucleate assembly of the platform of the 30S subunit by binding and bridging several RNA helices of the 16S rRNA. Functionally, forms an intersubunit bridge (bridge B4) with the 23S rRNA of the 50S subunit in the ribosome. The chain is Small ribosomal subunit protein uS15 from Sorangium cellulosum (strain So ce56) (Polyangium cellulosum (strain So ce56)).